Consider the following 606-residue polypeptide: Adenine deaminase (606 aa).

This sequence belongs to the metallo-dependent hydrolases superfamily. Adenine deaminase family. Mn(2+) serves as cofactor.

The catalysed reaction is adenine + H2O + H(+) = hypoxanthine + NH4(+). This chain is Adenine deaminase, found in Rubrobacter xylanophilus (strain DSM 9941 / JCM 11954 / NBRC 16129 / PRD-1).